The following is a 667-amino-acid chain: DNA ligase (667 aa).

NAD(+) contacts are provided by residues 32–36 (DSEYD), 81–82 (SL), and E110. Catalysis depends on K112, which acts as the N6-AMP-lysine intermediate. The NAD(+) site is built by R133, E167, K283, and K307. 4 residues coordinate Zn(2+): C401, C404, C419, and C424. Residues 586–667 (EGHPDFKDKT…FVQKQNEIEG (82 aa)) form the BRCT domain.

The protein belongs to the NAD-dependent DNA ligase family. LigA subfamily. Mg(2+) serves as cofactor. It depends on Mn(2+) as a cofactor.

It catalyses the reaction NAD(+) + (deoxyribonucleotide)n-3'-hydroxyl + 5'-phospho-(deoxyribonucleotide)m = (deoxyribonucleotide)n+m + AMP + beta-nicotinamide D-nucleotide.. In terms of biological role, DNA ligase that catalyzes the formation of phosphodiester linkages between 5'-phosphoryl and 3'-hydroxyl groups in double-stranded DNA using NAD as a coenzyme and as the energy source for the reaction. It is essential for DNA replication and repair of damaged DNA. This chain is DNA ligase, found in Staphylococcus saprophyticus subsp. saprophyticus (strain ATCC 15305 / DSM 20229 / NCIMB 8711 / NCTC 7292 / S-41).